A 483-amino-acid chain; its full sequence is MAASETAPFGVSAASKGGGGVAGARAQHGQLAVAGRVHDALVFAAGAVAAVLVLLATASFLSPMPVTNLVAFRSLPVSVASTSAASAAIDADVGVRGGPGAAGRTFYDDSRVSYAVEVGRRGGITGWDARRAAWMRLRYPRGLNATAAGRERVVMVSGSQAPPCRGEGGDHLLLRFLKNKVDYCRLHGVELLYNNALLQPRMLAYWAKIPAVRAAMLAHPDAEWVWWVDADAVFTDMDFSLPLHKYKDHNLVVYGWNKEVYGERSWVGLNAGVFLIRNCQWSLDFMDSWARMGPASPEYARWGSVLHDTLRGKSDKESDDQSALVYLLSEHEEKWGAKTYLEKGYFFQGYWVEVVDRLDDIAARYEAAERRPSAAAAHLRRRHAEREHERYAAARNAAVRGAVPGPAGGGQSGWRRPFVTHFTGCQPCGGEPNKIYSKKSCADGMNRALNFADDQVLRNYGYRHKDPLSDEVRPLPFDYPAAR.

The Cytoplasmic segment spans residues 1-40 (MAASETAPFGVSAASKGGGGVAGARAQHGQLAVAGRVHDA). Residues 41–61 (LVFAAGAVAAVLVLLATASFL) traverse the membrane as a helical; Signal-anchor for type II membrane protein segment. The Lumenal portion of the chain corresponds to 62–483 (SPMPVTNLVA…PLPFDYPAAR (422 aa)). The N-linked (GlcNAc...) asparagine glycan is linked to Asn-144.

Belongs to the glycosyltransferase 34 family.

The protein localises to the golgi apparatus membrane. Its function is as follows. Probable glycosyltransferase that may be involved in the biosynthesis of xyloglucan. The protein is Probable glycosyltransferase 6 of Oryza sativa subsp. indica (Rice).